Reading from the N-terminus, the 323-residue chain is Ribose 1,5-bisphosphate isomerase (323 aa).

Residues 22 to 25 (RGAA) and R65 contribute to the substrate site. Residue C130 is the Proton acceptor of the active site. Residue D199 is the Proton donor of the active site. Substrate is bound by residues 209–210 (NK) and K235. K210 is covalently cross-linked (Glycyl lysine isopeptide (Lys-Gly) (interchain with G-Cter in SAMP2)).

The protein belongs to the eIF-2B alpha/beta/delta subunits family. R15P isomerase subfamily.

It catalyses the reaction alpha-D-ribose 1,5-bisphosphate = D-ribulose 1,5-bisphosphate. In terms of biological role, catalyzes the isomerization of ribose 1,5-bisphosphate (R15P) to ribulose 1,5-bisphosphate (RuBP), the CO(2) acceptor and substrate for RubisCO. Functions in an archaeal AMP degradation pathway, together with AMP phosphorylase and RubisCO. The protein is Ribose 1,5-bisphosphate isomerase of Haloferax volcanii (strain ATCC 29605 / DSM 3757 / JCM 8879 / NBRC 14742 / NCIMB 2012 / VKM B-1768 / DS2) (Halobacterium volcanii).